Here is a 565-residue protein sequence, read N- to C-terminus: Adenine deaminase 1 (565 aa).

Belongs to the metallo-dependent hydrolases superfamily. Adenine deaminase family. Mn(2+) serves as cofactor.

It carries out the reaction adenine + H2O + H(+) = hypoxanthine + NH4(+). The sequence is that of Adenine deaminase 1 from Rhizobium meliloti (strain 1021) (Ensifer meliloti).